A 105-amino-acid chain; its full sequence is uncharacterized protein (105 aa).

Residues 22–105 (GSAGHGATEA…KKRIIKGKVM (84 aa)) form a disordered region. The span at 61-83 (HDSRPARGDARKRHCQENNKTDR) shows a compositional bias: basic and acidic residues. The span at 93–105 (NRRKKRIIKGKVM) shows a compositional bias: basic residues.

This is an uncharacterized protein from Escherichia coli (strain K12).